The chain runs to 598 residues: Aspartate--tRNA(Asp/Asn) ligase (598 aa).

Glu174 contributes to the L-aspartate binding site. The segment at 198 to 201 (QQLK) is aspartate. Arg220 lines the L-aspartate pocket. Residues 220–222 (RDE) and Gln229 contribute to the ATP site. L-aspartate is bound at residue His458. Residue Glu492 participates in ATP binding. L-aspartate is bound at residue Arg499. Residue 544 to 547 (GIDR) participates in ATP binding.

It belongs to the class-II aminoacyl-tRNA synthetase family. Type 1 subfamily. Homodimer.

Its subcellular location is the cytoplasm. It carries out the reaction tRNA(Asx) + L-aspartate + ATP = L-aspartyl-tRNA(Asx) + AMP + diphosphate. Its function is as follows. Aspartyl-tRNA synthetase with relaxed tRNA specificity since it is able to aspartylate not only its cognate tRNA(Asp) but also tRNA(Asn). Reaction proceeds in two steps: L-aspartate is first activated by ATP to form Asp-AMP and then transferred to the acceptor end of tRNA(Asp/Asn). The chain is Aspartate--tRNA(Asp/Asn) ligase from Dehalococcoides mccartyi (strain ATCC BAA-2100 / JCM 16839 / KCTC 5957 / BAV1).